The chain runs to 449 residues: Trigger factor (449 aa).

In terms of domain architecture, PPIase FKBP-type spans 172–257 (GDRVTVDFVG…LKQVEWAHLP (86 aa)).

The protein belongs to the FKBP-type PPIase family. Tig subfamily.

The protein resides in the cytoplasm. The enzyme catalyses [protein]-peptidylproline (omega=180) = [protein]-peptidylproline (omega=0). Functionally, involved in protein export. Acts as a chaperone by maintaining the newly synthesized protein in an open conformation. Functions as a peptidyl-prolyl cis-trans isomerase. This is Trigger factor from Ralstonia nicotianae (strain ATCC BAA-1114 / GMI1000) (Ralstonia solanacearum).